The following is a 389-amino-acid chain: Phospho-N-acetylmuramoyl-pentapeptide-transferase (389 aa).

A run of 10 helical transmembrane segments spans residues 25–45, 73–93, 97–117, 135–155, 189–209, 222–242, 259–279, 286–306, 311–331, and 366–386; these read RAVA…PWVI, TMGG…WADL, FIWI…VDDY, FWQS…VSEA, SMTY…VIVG, GLVI…AYVM, AGEM…FLWF, VFMG…IAVI, IVLF…MLQV, and QVVV…LSTL.

This sequence belongs to the glycosyltransferase 4 family. MraY subfamily. Mg(2+) serves as cofactor.

Its subcellular location is the cell inner membrane. It catalyses the reaction UDP-N-acetyl-alpha-D-muramoyl-L-alanyl-gamma-D-glutamyl-meso-2,6-diaminopimeloyl-D-alanyl-D-alanine + di-trans,octa-cis-undecaprenyl phosphate = di-trans,octa-cis-undecaprenyl diphospho-N-acetyl-alpha-D-muramoyl-L-alanyl-D-glutamyl-meso-2,6-diaminopimeloyl-D-alanyl-D-alanine + UMP. It functions in the pathway cell wall biogenesis; peptidoglycan biosynthesis. Functionally, catalyzes the initial step of the lipid cycle reactions in the biosynthesis of the cell wall peptidoglycan: transfers peptidoglycan precursor phospho-MurNAc-pentapeptide from UDP-MurNAc-pentapeptide onto the lipid carrier undecaprenyl phosphate, yielding undecaprenyl-pyrophosphoryl-MurNAc-pentapeptide, known as lipid I. The chain is Phospho-N-acetylmuramoyl-pentapeptide-transferase from Paraburkholderia phymatum (strain DSM 17167 / CIP 108236 / LMG 21445 / STM815) (Burkholderia phymatum).